The chain runs to 189 residues: Ribosome maturation factor RimP (189 aa).

This sequence belongs to the RimP family.

Its subcellular location is the cytoplasm. In terms of biological role, required for maturation of 30S ribosomal subunits. In Mycobacteroides abscessus (strain ATCC 19977 / DSM 44196 / CCUG 20993 / CIP 104536 / JCM 13569 / NCTC 13031 / TMC 1543 / L948) (Mycobacterium abscessus), this protein is Ribosome maturation factor RimP.